A 227-amino-acid chain; its full sequence is Enolase-phosphatase E1 (227 aa).

This sequence belongs to the HAD-like hydrolase superfamily. MasA/MtnC family. Monomer. Requires Mg(2+) as cofactor.

The catalysed reaction is 5-methylsulfanyl-2,3-dioxopentyl phosphate + H2O = 1,2-dihydroxy-5-(methylsulfanyl)pent-1-en-3-one + phosphate. It functions in the pathway amino-acid biosynthesis; L-methionine biosynthesis via salvage pathway; L-methionine from S-methyl-5-thio-alpha-D-ribose 1-phosphate: step 3/6. The protein operates within amino-acid biosynthesis; L-methionine biosynthesis via salvage pathway; L-methionine from S-methyl-5-thio-alpha-D-ribose 1-phosphate: step 4/6. Its function is as follows. Bifunctional enzyme that catalyzes the enolization of 2,3-diketo-5-methylthiopentyl-1-phosphate (DK-MTP-1-P) into the intermediate 2-hydroxy-3-keto-5-methylthiopentenyl-1-phosphate (HK-MTPenyl-1-P), which is then dephosphorylated to form the acireductone 1,2-dihydroxy-3-keto-5-methylthiopentene (DHK-MTPene). In Persephonella marina (strain DSM 14350 / EX-H1), this protein is Enolase-phosphatase E1.